Here is a 362-residue protein sequence, read N- to C-terminus: Methylthioribose-1-phosphate isomerase (362 aa).

The Proton donor role is filled by Asp252.

The protein belongs to the eIF-2B alpha/beta/delta subunits family. MtnA subfamily.

It is found in the cytoplasm. The protein localises to the nucleus. The enzyme catalyses 5-(methylsulfanyl)-alpha-D-ribose 1-phosphate = 5-(methylsulfanyl)-D-ribulose 1-phosphate. The protein operates within amino-acid biosynthesis; L-methionine biosynthesis via salvage pathway; L-methionine from S-methyl-5-thio-alpha-D-ribose 1-phosphate: step 1/6. Functionally, catalyzes the interconversion of methylthioribose-1-phosphate (MTR-1-P) into methylthioribulose-1-phosphate (MTRu-1-P). The chain is Methylthioribose-1-phosphate isomerase from Drosophila virilis (Fruit fly).